The sequence spans 360 residues: Ferredoxin--NADP reductase (360 aa).

FAD-binding residues include T25, E44, Q52, Y57, V97, F132, D298, and S339.

It belongs to the ferredoxin--NADP reductase type 2 family. Homodimer. Requires FAD as cofactor.

The catalysed reaction is 2 reduced [2Fe-2S]-[ferredoxin] + NADP(+) + H(+) = 2 oxidized [2Fe-2S]-[ferredoxin] + NADPH. This chain is Ferredoxin--NADP reductase, found in Chlorobaculum tepidum (strain ATCC 49652 / DSM 12025 / NBRC 103806 / TLS) (Chlorobium tepidum).